We begin with the raw amino-acid sequence, 37 residues long: Calcitonin gene-related peptide (37 aa).

Cys-2 and Cys-7 are disulfide-bonded. Phe-37 is subject to Phenylalanine amide.

Belongs to the calcitonin family.

Its function is as follows. CGRP induces vasodilation. It dilates a variety of vessels including the coronary, cerebral and systemic vasculature. Its abundance in the CNS also points toward a neurotransmitter or neuromodulator role. This is Calcitonin gene-related peptide from Pelophylax ridibundus (Marsh frog).